Reading from the N-terminus, the 583-residue chain is Sensor protein SrrB (583 aa).

At 1 to 11 the chain is on the cytoplasmic side; that stretch reads MMSRLNSVVIK. A helical transmembrane segment spans residues 12 to 32; the sequence is LWLTIILIVTTVLILLSIALI. Topologically, residues 33-174 are extracellular; the sequence is TFMQYYFTQE…SIEDTNNAIT (142 aa). A helical membrane pass occupies residues 175-195; it reads IITIITAVIFLTITTVFAFFL. At 196–583 the chain is on the cytoplasmic side; sequence SSRITKPLRR…TFIIKLPKPE (388 aa). In terms of domain architecture, HAMP spans 197-249; sequence SRITKPLRRLRDQATRVSEGDYSYKPSVTTKDEIGQLSQAFNQMSTEIEEHVD. A Histidine kinase domain is found at 366–583; sequence NVSHELRTPI…TFIIKLPKPE (218 aa). Histidine 369 is subject to Phosphohistidine; by autocatalysis.

It is found in the cell membrane. The catalysed reaction is ATP + protein L-histidine = ADP + protein N-phospho-L-histidine.. Member of the two-component regulatory system SrrA/SrrB, which is involved in the global regulation of staphylococcal virulence factors in response to environmental oxygen levels as well as biofilm formation. Also plays an essential role in host-derived nitric oxide resistance by regulating hmp/flavohemoglobin, an enzyme that detoxifies nitric oxide by converting it to nitrate. Functions as a sensor protein kinase which is autophosphorylated at a histidine residue and transfers its phosphate group to SrrA. In turn, SrrA binds to the upstream promoter regions of the target genes to positively and negatively regulate their expression. In Staphylococcus aureus (strain Mu50 / ATCC 700699), this protein is Sensor protein SrrB (srrB).